A 270-amino-acid polypeptide reads, in one-letter code: 2-aminoethanethiol dioxygenase (270 aa).

Residues F21 to P48 form a disordered region. Residues H112 and H114 each contribute to the Fe cation site. The disordered stretch occupies residues G140 to A164. Residue H193 participates in Fe cation binding. A cross-link (3'-(S-cysteinyl)-tyrosine (Cys-Tyr)) is located at residues C220 to Y223.

Monomer. Fe cation is required as a cofactor.

It carries out the reaction cysteamine + O2 = hypotaurine + H(+). It catalyses the reaction N-terminal L-cysteinyl-[protein] + O2 = N-terminal S-hydroxy-S-oxy-L-cysteinyl-[protein] + H(+). Plays a vital role in regulating thiol metabolism and preserving oxygen homeostasis by oxidizing the sulfur of cysteamine and N-terminal cysteine-containing proteins to their corresponding sulfinic acids using O2 as a cosubstrate. Catalyzes the oxidation of cysteamine (2-aminoethanethiol) to hypotaurine. Catalyzes the oxidation of regulators of G-protein signaling 4 (RGS4) and 5 (RGS5) and interleukin-32 (IL32). The chain is 2-aminoethanethiol dioxygenase (ADO) from Homo sapiens (Human).